Reading from the N-terminus, the 459-residue chain is Friend virus susceptibility protein 1 (459 aa).

The interval 192-269 (EAELPTVLAS…LNSLAHSNRQ (78 aa)) is disordered. Positions 213-223 (SKERTQQDKAD) are enriched in basic and acidic residues. The segment covering 226 to 238 (QIQSSTSLVTSEP) has biased composition (polar residues).

Its function is as follows. Retroviral restriction factor that prevents infection by gammaretroviruses. Acts by interacting with the capsid protein ca after entry of the virus into the cell. This interaction presumably disrupt the capsid thereby inactivating the viral genome, making it unable to enter host nucleus and integrate into host genome. The protein is Friend virus susceptibility protein 1 (Fv1) of Mus musculus (Mouse).